A 394-amino-acid polypeptide reads, in one-letter code: Elongation factor Tu (394 aa).

Positions K10–K204 constitute a tr-type G domain. Residues G19–T26 form a G1 region. A GTP-binding site is contributed by G19 to T26. T26 serves as a coordination point for Mg(2+). Residues G60–N64 are G2. A G3 region spans residues D81–G84. Residues D81 to H85 and N136 to D139 contribute to the GTP site. The segment at N136–D139 is G4. The interval S174–L176 is G5.

It belongs to the TRAFAC class translation factor GTPase superfamily. Classic translation factor GTPase family. EF-Tu/EF-1A subfamily. In terms of assembly, monomer.

Its subcellular location is the cytoplasm. It catalyses the reaction GTP + H2O = GDP + phosphate + H(+). GTP hydrolase that promotes the GTP-dependent binding of aminoacyl-tRNA to the A-site of ribosomes during protein biosynthesis. The chain is Elongation factor Tu from Blochmanniella pennsylvanica (strain BPEN).